Reading from the N-terminus, the 106-residue chain is NADH dehydrogenase [ubiquinone] iron-sulfur protein 5 (106 aa).

Positions 30 to 74 (AGRCHAFEKEWIECAHGIGYTRAEKECKIEYDDFVECLLRQKTMR) constitute a CHCH domain. Short sequence motifs (cx9C motif) lie at residues 33-43 (CHAFEKEWIEC) and 56-66 (CKIEYDDFVEC). Intrachain disulfides connect C33–C66 and C43–C56. Residues 84–106 (DKLIKEGKYTPPPHHIGKGEPRP) form a disordered region.

Belongs to the complex I NDUFS5 subunit family. In terms of assembly, mammalian complex I is composed of 45 different subunits. This is a component of the iron-sulfur (IP) fragment of the enzyme.

Its subcellular location is the mitochondrion inner membrane. It localises to the mitochondrion intermembrane space. Its function is as follows. Accessory subunit of the mitochondrial membrane respiratory chain NADH dehydrogenase (Complex I), that is believed not to be involved in catalysis. Complex I functions in the transfer of electrons from NADH to the respiratory chain. The immediate electron acceptor for the enzyme is believed to be ubiquinone. This chain is NADH dehydrogenase [ubiquinone] iron-sulfur protein 5 (NDUFS5), found in Homo sapiens (Human).